A 132-amino-acid polypeptide reads, in one-letter code: Histone H2B.1 (132 aa).

Over residues 1-13 (MSAKASKAPASKA) the composition is skewed to low complexity. The interval 1-39 (MSAKASKAPASKAPAEKKPAAKKTSSSTDPSKKRTKARK) is disordered. Lys-7 is subject to N6-acetyllysine; alternate. Lys-7 is covalently cross-linked (Glycyl lysine isopeptide (Lys-Gly) (interchain with G-Cter in SUMO); alternate). Phosphoserine is present on Ser-11. Lys-12 carries the N6-acetyllysine modification. Lys-17 carries the post-translational modification N6-acetyllysine; alternate. A Glycyl lysine isopeptide (Lys-Gly) (interchain with G-Cter in SUMO); alternate cross-link involves residue Lys-17. Lys-18 is covalently cross-linked (Glycyl lysine isopeptide (Lys-Gly) (interchain with G-Cter in SUMO)). A Glycyl lysine isopeptide (Lys-Gly) (interchain with G-Cter in ubiquitin) cross-link involves residue Lys-125.

The protein belongs to the histone H2B family. As to quaternary structure, the nucleosome is a histone octamer containing two molecules each of H2A, H2B, H3 and H4 assembled in one H3-H4 heterotetramer and two H2A-H2B heterodimers. The octamer wraps approximately 147 bp of DNA. Post-translationally, monoubiquitinated by the UBC2-BRE1 complex to form H2BK123ub1. H2BK123ub1 gives a specific tag for epigenetic transcriptional activation and is also prerequisite for H3K4me and H3K79me formation. H2BK123ub1 also modulates the formation of double-strand breaks during meiosis and is a prerequisite for DNA-damage checkpoint activation. Phosphorylated by STE20 to form H2BS10ph during progression through meiotic prophase. May be correlated with chromosome condensation. In terms of processing, acetylated by GCN5 to form H2BK11ac and H2BK16ac. H2BK16ac can also be formed by ESA1. Acetylation of N-terminal lysines and particularly formation of H2BK11acK16ac has a positive effect on transcription. Post-translationally, sumoylation to form H2BK6su and probably also H2BK16su or H2BK17su, occurs preferentially near the telomeres and represses gene transcription.

The protein resides in the nucleus. It is found in the chromosome. In terms of biological role, core component of nucleosome. Nucleosomes wrap and compact DNA into chromatin, limiting DNA accessibility to the cellular machineries which require DNA as a template. Histones thereby play a central role in transcription regulation, DNA repair, DNA replication and chromosomal stability. DNA accessibility is regulated via a complex set of post-translational modifications of histones, also called histone code, and nucleosome remodeling. This chain is Histone H2B.1 (HTB1), found in Kluyveromyces lactis (strain ATCC 8585 / CBS 2359 / DSM 70799 / NBRC 1267 / NRRL Y-1140 / WM37) (Yeast).